We begin with the raw amino-acid sequence, 209 residues long: Ubiquitin-conjugating enzyme E2 S (209 aa).

Positions 14–160 constitute a UBC core domain; sequence QTIRQVMREL…ARMMTEIHAQ (147 aa). Cys-98 (glycyl thioester intermediate) is an active-site residue. The disordered stretch occupies residues 164–209; the sequence is CGVGASGDAKDDDGPSTKKHAGLDKKLQDKKKEKLLKEKKRMLKRL. Residues 171-199 show a composition bias toward basic and acidic residues; sequence DAKDDDGPSTKKHAGLDKKLQDKKKEKLL. The span at 200–209 shows a compositional bias: basic residues; the sequence is KEKKRMLKRL.

The protein belongs to the ubiquitin-conjugating enzyme family.

The catalysed reaction is S-ubiquitinyl-[E1 ubiquitin-activating enzyme]-L-cysteine + [E2 ubiquitin-conjugating enzyme]-L-cysteine = [E1 ubiquitin-activating enzyme]-L-cysteine + S-ubiquitinyl-[E2 ubiquitin-conjugating enzyme]-L-cysteine.. It participates in protein modification; protein ubiquitination. In terms of biological role, catalyzes the covalent attachment of ubiquitin to other proteins. Acts as an essential factor of the anaphase promoting complex/cyclosome (APC/C), a cell cycle-regulated ubiquitin ligase that controls progression through mitosis. Acts by specifically elongating polyubiquitin chains initiated by the E2 enzyme vih/UbcH10 on APC/C substrates, enhancing the degradation of APC/C substrates by the proteasome and promoting mitotic exit. This Drosophila yakuba (Fruit fly) protein is Ubiquitin-conjugating enzyme E2 S.